Here is a 422-residue protein sequence, read N- to C-terminus: Histidine--tRNA ligase (422 aa).

It belongs to the class-II aminoacyl-tRNA synthetase family. In terms of assembly, homodimer.

The protein localises to the cytoplasm. The catalysed reaction is tRNA(His) + L-histidine + ATP = L-histidyl-tRNA(His) + AMP + diphosphate + H(+). In Vibrio vulnificus (strain CMCP6), this protein is Histidine--tRNA ligase.